Consider the following 359-residue polypeptide: Type-1 angiotensin II receptor A (359 aa).

Residues 1–25 (MALNSSAEDGIKRIQDDCPKAGRHS) lie on the Extracellular side of the membrane. N-linked (GlcNAc...) asparagine glycosylation is present at Asn4. Angiotensin II contacts are provided by Gln15 and Asp17. Disulfide bonds link Cys18/Cys274 and Cys101/Cys180. A helical membrane pass occupies residues 26–55 (YIFVMIPTLYSIIFVVGIFGNSLVVIVIYF). Over 56 to 61 (YMKLKT) the chain is Cytoplasmic. Residues 62–89 (VASVFLLNLALADLCFLLTLPLWAVYTA) form a helical membrane-spanning segment. At 90 to 98 (MEYRWPFGN) the chain is on the extracellular side. The helical transmembrane segment at 99–125 (HLCKIASASVSFNLYASVFLLTCLSID) threads the bilayer. Over 126–141 (RYLAIVHPMKSRLRRT) the chain is Cytoplasmic. The helical transmembrane segment at 142–165 (MLVAKVTCIIIWLMAGLASLPAVI) threads the bilayer. The Extracellular segment spans residues 166–190 (HRNVYFIENTNITVCAFHYESRNST). Residue Arg167 participates in angiotensin II binding. An N-linked (GlcNAc...) asparagine glycan is attached at Asn176. Residues Phe182, His183, and Tyr184 each coordinate angiotensin II. Residue Asn188 is glycosylated (N-linked (GlcNAc...) asparagine). A helical transmembrane segment spans residues 191-216 (LPIGLGLTKNILGFLFPFLIILTSYT). Lys199 is an angiotensin II binding site. The Cytoplasmic portion of the chain corresponds to 217 to 239 (LIWKALKKAYEIQKNKPRNDDIF). Residues 240 to 268 (RIIMAIVLFFFFSWVPHQIFTFLDVLIQL) form a helical membrane-spanning segment. At 269 to 278 (GVIHDCKISD) the chain is on the extracellular side. The helical transmembrane segment at 279 to 304 (IVDTAMPITICIAYFNNCLNPLFYGF) threads the bilayer. The Cytoplasmic portion of the chain corresponds to 305-359 (LGKKFKKYFLQLLKYIPPKAKSHSSLSTKMSTLSYRPSDNMSSSAKKPASCFEVE). Polar residues predominate over residues 337–349 (LSYRPSDNMSSSA). The interval 337–359 (LSYRPSDNMSSSAKKPASCFEVE) is disordered. The S-palmitoyl cysteine moiety is linked to residue Cys355.

This sequence belongs to the G-protein coupled receptor 1 family. In terms of assembly, interacts with MAS1. Interacts with ARRB1. Interacts with FLNA (via filamin repeat 21); increases PKA-mediated phosphorylation of FLNA. In terms of processing, C-terminal Ser or Thr residues may be phosphorylated. Is expressed in the liver, kidney, aorta, lung, uterus, ovary, spleen, heart, adrenal gland, and vascular smooth muscle cell.

It is found in the cell membrane. Receptor for angiotensin II, a vasoconstricting peptide, which acts as a key regulator of blood pressure and sodium retention by the kidney. The activated receptor in turn couples to G-alpha proteins G(q) (GNAQ, GNA11, GNA14 or GNA15) and thus activates phospholipase C and increases the cytosolic Ca(2+) concentrations, which in turn triggers cellular responses such as stimulation of protein kinase C. The protein is Type-1 angiotensin II receptor A (Agtr1) of Rattus norvegicus (Rat).